The sequence spans 94 residues: Co-chaperonin GroES (94 aa).

Belongs to the GroES chaperonin family. As to quaternary structure, heptamer of 7 subunits arranged in a ring. Interacts with the chaperonin GroEL.

Its subcellular location is the cytoplasm. Functionally, together with the chaperonin GroEL, plays an essential role in assisting protein folding. The GroEL-GroES system forms a nano-cage that allows encapsulation of the non-native substrate proteins and provides a physical environment optimized to promote and accelerate protein folding. GroES binds to the apical surface of the GroEL ring, thereby capping the opening of the GroEL channel. The sequence is that of Co-chaperonin GroES from Streptococcus mitis.